Here is a 209-residue protein sequence, read N- to C-terminus: Probable endopeptidase Cgl2188 (209 aa).

Residues 1–35 (MGKHRRNNSNATRKAVAASAVALGATAAIASPAQA) form the signal peptide. The NlpC/P60 domain occupies 95–209 (ASTGQAIVDA…YMPFHSAVRF (115 aa)). Cys125 serves as the catalytic Nucleophile. His173 (proton acceptor) is an active-site residue. His185 is a catalytic residue.

The protein belongs to the peptidase C40 family.

Its subcellular location is the secreted. The protein is Probable endopeptidase Cgl2188 of Corynebacterium glutamicum (strain ATCC 13032 / DSM 20300 / JCM 1318 / BCRC 11384 / CCUG 27702 / LMG 3730 / NBRC 12168 / NCIMB 10025 / NRRL B-2784 / 534).